A 357-amino-acid polypeptide reads, in one-letter code: Histidinol-phosphate aminotransferase (357 aa).

At lysine 212 the chain carries N6-(pyridoxal phosphate)lysine.

The protein belongs to the class-II pyridoxal-phosphate-dependent aminotransferase family. Histidinol-phosphate aminotransferase subfamily. In terms of assembly, homodimer. The cofactor is pyridoxal 5'-phosphate.

The catalysed reaction is L-histidinol phosphate + 2-oxoglutarate = 3-(imidazol-4-yl)-2-oxopropyl phosphate + L-glutamate. The protein operates within amino-acid biosynthesis; L-histidine biosynthesis; L-histidine from 5-phospho-alpha-D-ribose 1-diphosphate: step 7/9. This Pectobacterium atrosepticum (strain SCRI 1043 / ATCC BAA-672) (Erwinia carotovora subsp. atroseptica) protein is Histidinol-phosphate aminotransferase.